Here is a 107-residue protein sequence, read N- to C-terminus: Small ribosomal subunit protein eS25 (107 aa).

The tract at residues 1–35 (MPPKQQLSKAAKAAAAMAGGKKSKKKWSKKSHKDK) is disordered. Residues 8 to 20 (SKAAKAAAAMAGG) show a composition bias toward low complexity. Residues 21 to 35 (KKSKKKWSKKSHKDK) are compositionally biased toward basic residues.

This sequence belongs to the eukaryotic ribosomal protein eS25 family.

The protein is Small ribosomal subunit protein eS25 (RPS25) of Candida glabrata (strain ATCC 2001 / BCRC 20586 / JCM 3761 / NBRC 0622 / NRRL Y-65 / CBS 138) (Yeast).